The primary structure comprises 189 residues: MTTEVELVVLADSEGNAIGTAPKATVHTKDTPLHFAFSTYILNPRGELLVTRRALSKKTWPGVWTNSMCGHPGPDETNADAIRRRGVDELGLEVDSFLDIQEVLPDYQYRAVDASGIVEWELCPVHLVRLAVGEFVEPLDDEVEEFEWAEPQKLFDAVDATPFVFSPWMVDQLSAPELRQAILEAFDAE.

Residues H27 and H34 each contribute to the Mn(2+) site. Residues 32–171 form the Nudix hydrolase domain; it reads PLHFAFSTYI…PFVFSPWMVD (140 aa). C69 is a catalytic residue. Position 71 (H71) interacts with Mn(2+). Residue E89 participates in Mg(2+) binding. Mn(2+)-binding residues include E119 and E121. The active site involves E121.

This sequence belongs to the IPP isomerase type 1 family. The cofactor is Mg(2+). Requires Mn(2+) as cofactor.

The protein resides in the cytoplasm. The catalysed reaction is isopentenyl diphosphate = dimethylallyl diphosphate. Its pathway is isoprenoid biosynthesis; dimethylallyl diphosphate biosynthesis; dimethylallyl diphosphate from isopentenyl diphosphate: step 1/1. Functionally, catalyzes the 1,3-allylic rearrangement of the homoallylic substrate isopentenyl (IPP) to its highly electrophilic allylic isomer, dimethylallyl diphosphate (DMAPP). This chain is Isopentenyl-diphosphate Delta-isomerase, found in Corynebacterium glutamicum (strain R).